An 841-amino-acid polypeptide reads, in one-letter code: Protein translocase subunit SecA (841 aa).

Residues Q86, 104-108 (GEGKT), and D493 contribute to the ATP site. The segment at 788-822 (EEVAEGKAVRPSANGQEDKKAKRKPVRKAENIGRN) is disordered. Residues C825, C827, C836, and C837 each coordinate Zn(2+).

This sequence belongs to the SecA family. Monomer and homodimer. Part of the essential Sec protein translocation apparatus which comprises SecA, SecYEG and auxiliary proteins SecDF. Other proteins may also be involved. It depends on Zn(2+) as a cofactor.

It localises to the cell membrane. The protein resides in the cytoplasm. It catalyses the reaction ATP + H2O + cellular proteinSide 1 = ADP + phosphate + cellular proteinSide 2.. In terms of biological role, part of the Sec protein translocase complex. Interacts with the SecYEG preprotein conducting channel. Has a central role in coupling the hydrolysis of ATP to the transfer of proteins into and across the cell membrane, serving as an ATP-driven molecular motor driving the stepwise translocation of polypeptide chains across the membrane. The polypeptide is Protein translocase subunit SecA (Shouchella clausii (strain KSM-K16) (Alkalihalobacillus clausii)).